We begin with the raw amino-acid sequence, 206 residues long: BAG family molecular chaperone regulator 1B (206 aa).

One can recognise a BAG domain in the interval 122–202 (IEAYIDELQQ…QYLSKLDSTK (81 aa)). S144 is subject to Phosphoserine.

In terms of assembly, binds to the ATPase domain of HSP70/HSC chaperones.

Inhibits the chaperone activity of HSP70/HSC70 by promoting substrate release. This Schizosaccharomyces pombe (strain 972 / ATCC 24843) (Fission yeast) protein is BAG family molecular chaperone regulator 1B (bag102).